A 203-amino-acid chain; its full sequence is Ribonuclease HII (203 aa).

The region spanning Gly14–Leu203 is the RNase H type-2 domain. The a divalent metal cation site is built by Asp20, Glu21, and Asp112.

This sequence belongs to the RNase HII family. Mn(2+) serves as cofactor. The cofactor is Mg(2+).

It localises to the cytoplasm. The catalysed reaction is Endonucleolytic cleavage to 5'-phosphomonoester.. Its function is as follows. Endonuclease that specifically degrades the RNA of RNA-DNA hybrids. The protein is Ribonuclease HII of Wolbachia sp. subsp. Brugia malayi (strain TRS).